A 786-amino-acid chain; its full sequence is Zinc finger transcription factor YRM1 (786 aa).

The segment at 1 to 25 is disordered; that stretch reads MSKRGSLQDRASPSEETVKKAQKRR. The segment at residues 31–59 is a DNA-binding region (zn(2)-C6 fungal-type); sequence CAFCRKRKLRCDQQKPMCSTCKTRGRSGC. The tract at residues 721 to 747 is disordered; it reads PLAGNSPGLPPEEVRNNSENASHNNET. Residues 737-747 show a composition bias toward polar residues; it reads NSENASHNNET.

The protein localises to the cytoplasm. It localises to the nucleus. In terms of biological role, transcription factor involved in the regulation of multidrug resistance genes. Acts in concert with YRR1. This Saccharomyces cerevisiae (strain ATCC 204508 / S288c) (Baker's yeast) protein is Zinc finger transcription factor YRM1 (YRM1).